A 597-amino-acid chain; its full sequence is 2-succinyl-5-enolpyruvyl-6-hydroxy-3-cyclohexene-1-carboxylate synthase (597 aa).

This sequence belongs to the TPP enzyme family. MenD subfamily. In terms of assembly, homodimer. The cofactor is Mg(2+). Mn(2+) is required as a cofactor. Requires thiamine diphosphate as cofactor.

It carries out the reaction isochorismate + 2-oxoglutarate + H(+) = 5-enolpyruvoyl-6-hydroxy-2-succinyl-cyclohex-3-ene-1-carboxylate + CO2. The protein operates within quinol/quinone metabolism; 1,4-dihydroxy-2-naphthoate biosynthesis; 1,4-dihydroxy-2-naphthoate from chorismate: step 2/7. It participates in cofactor biosynthesis; phylloquinone biosynthesis. Functionally, catalyzes the thiamine diphosphate-dependent decarboxylation of 2-oxoglutarate and the subsequent addition of the resulting succinic semialdehyde-thiamine pyrophosphate anion to isochorismate to yield 2-succinyl-5-enolpyruvyl-6-hydroxy-3-cyclohexene-1-carboxylate (SEPHCHC). In Synechococcus sp. (strain JA-3-3Ab) (Cyanobacteria bacterium Yellowstone A-Prime), this protein is 2-succinyl-5-enolpyruvyl-6-hydroxy-3-cyclohexene-1-carboxylate synthase.